An 89-amino-acid chain; its full sequence is Small ribosomal subunit protein uS15 (89 aa).

Over residues 1 to 10 the composition is skewed to basic and acidic residues; it reads MSITAERKAE. The tract at residues 1–24 is disordered; the sequence is MSITAERKAEVIQGNANKAGDTGS.

It belongs to the universal ribosomal protein uS15 family. Part of the 30S ribosomal subunit. Forms a bridge to the 50S subunit in the 70S ribosome, contacting the 23S rRNA.

Its function is as follows. One of the primary rRNA binding proteins, it binds directly to 16S rRNA where it helps nucleate assembly of the platform of the 30S subunit by binding and bridging several RNA helices of the 16S rRNA. Functionally, forms an intersubunit bridge (bridge B4) with the 23S rRNA of the 50S subunit in the ribosome. The sequence is that of Small ribosomal subunit protein uS15 from Rhodopseudomonas palustris (strain HaA2).